The primary structure comprises 174 residues: uncharacterized protein (174 aa).

This is an uncharacterized protein from Mycobacterium tuberculosis (strain CDC 1551 / Oshkosh).